Here is a 351-residue protein sequence, read N- to C-terminus: Protein Tex24 (351 aa).

Disordered regions lie at residues 69–101, 117–144, and 275–298; these read PSTA…PSLS, PEDR…AQGK, and EKVK…PKSM. The segment covering 73–83 has biased composition (basic residues); sequence HGKRKPGHLPR. The span at 275-285 shows a compositional bias: basic and acidic residues; the sequence is EKVKPSSHDMH.

As to expression, specific to testis, where it is expressed in spermatogonia.

The protein localises to the nucleus. Functionally, nuclear factor which might have a role in spermatogenesis. The sequence is that of Protein Tex24 from Mus musculus (Mouse).